A 273-amino-acid chain; its full sequence is MERTIGIDAGGTLTKIAYFNEKRLLTFEKFYSHEQHKIIDWIKNNNGIKQICITGGKSKLLQQLLTGSYKIIELNEFEATLAGVQYILKEEKHAIRNFILTNIGTGTSIHYVYNEQYIRAGGTGVGGGTIMGLSKLLTNIDHFEDVIPLTKVGSRKELDITVGDIYGGILSPIDNNLTASNFGKAAITESNNSSSDILATVQGLVGEVVTALSLQFAETKNIEHIIYIGSTLCNNVQLQHIISSYTEYQNKTPIFLQDGGNSGAIGALLHATK.

Position 8-15 (8-15) interacts with ATP; it reads DAGGTLTK. Glu76 serves as the catalytic Proton acceptor. ATP is bound by residues Thr105, 127–131, Phe143, and Ser230; that span reads GGTIM.

It belongs to the type II pantothenate kinase family. In terms of assembly, homodimer.

The protein resides in the cytoplasm. It catalyses the reaction (R)-pantothenate + ATP = (R)-4'-phosphopantothenate + ADP + H(+). It participates in cofactor biosynthesis; coenzyme A biosynthesis; CoA from (R)-pantothenate: step 1/5. Its function is as follows. Catalyzes the phosphorylation of pantothenate (Pan), the first step in CoA biosynthesis. This is Type II pantothenate kinase from Bacillus cereus (strain G9842).